The chain runs to 267 residues: tRNA pseudouridine synthase A (267 aa).

Asp-55 functions as the Nucleophile in the catalytic mechanism. Tyr-111 provides a ligand contact to substrate.

This sequence belongs to the tRNA pseudouridine synthase TruA family.

It catalyses the reaction uridine(38/39/40) in tRNA = pseudouridine(38/39/40) in tRNA. Functionally, formation of pseudouridine at positions 38, 39 and 40 in the anticodon stem and loop of transfer RNAs. This chain is tRNA pseudouridine synthase A, found in Thermococcus gammatolerans (strain DSM 15229 / JCM 11827 / EJ3).